Here is a 471-residue protein sequence, read N- to C-terminus: ATP synthase subunit beta (471 aa).

156–163 (GGAGVGKT) contributes to the ATP binding site.

Belongs to the ATPase alpha/beta chains family. As to quaternary structure, F-type ATPases have 2 components, CF(1) - the catalytic core - and CF(0) - the membrane proton channel. CF(1) has five subunits: alpha(3), beta(3), gamma(1), delta(1), epsilon(1). CF(0) has three main subunits: a(1), b(2) and c(9-12). The alpha and beta chains form an alternating ring which encloses part of the gamma chain. CF(1) is attached to CF(0) by a central stalk formed by the gamma and epsilon chains, while a peripheral stalk is formed by the delta and b chains.

It localises to the cell membrane. The catalysed reaction is ATP + H2O + 4 H(+)(in) = ADP + phosphate + 5 H(+)(out). Functionally, produces ATP from ADP in the presence of a proton gradient across the membrane. The catalytic sites are hosted primarily by the beta subunits. This is ATP synthase subunit beta from Lysinibacillus sphaericus (strain C3-41).